A 113-amino-acid polypeptide reads, in one-letter code: MDPEEIKQKKLQEMQAKAQDPEYQRQMQEQQMQYEMQKQKVLRQILSEEARSRLARIKLAKPEFARQVESQLIQLAQAGRLPVPLTDEYFKGLLDKIYEMNKSTKREVTITRR.

The span at 1-12 shows a compositional bias: basic and acidic residues; the sequence is MDPEEIKQKKLQ. The interval 1–22 is disordered; sequence MDPEEIKQKKLQEMQAKAQDPE.

The protein belongs to the PDCD5 family.

The chain is DNA-binding protein Mevan_1162 from Methanococcus vannielii (strain ATCC 35089 / DSM 1224 / JCM 13029 / OCM 148 / SB).